A 154-amino-acid chain; its full sequence is Large ribosomal subunit protein uL13 (154 aa).

The protein belongs to the universal ribosomal protein uL13 family. Part of the 50S ribosomal subunit.

Functionally, this protein is one of the early assembly proteins of the 50S ribosomal subunit, although it is not seen to bind rRNA by itself. It is important during the early stages of 50S assembly. This chain is Large ribosomal subunit protein uL13, found in Brucella melitensis biotype 2 (strain ATCC 23457).